The chain runs to 482 residues: tRNA modification GTPase MnmE (482 aa).

Residues R25, E82, and K135 each coordinate (6S)-5-formyl-5,6,7,8-tetrahydrofolate. One can recognise a TrmE-type G domain in the interval G231–G404. Position 241 (N241) interacts with K(+). GTP is bound by residues N241–S246, T260–T266, D285–G288, and S385–R387. S245 contributes to the Mg(2+) binding site. Residues T260, I262, and T265 each coordinate K(+). T266 contacts Mg(2+). K482 contacts (6S)-5-formyl-5,6,7,8-tetrahydrofolate.

It belongs to the TRAFAC class TrmE-Era-EngA-EngB-Septin-like GTPase superfamily. TrmE GTPase family. In terms of assembly, homodimer. Heterotetramer of two MnmE and two MnmG subunits. Requires K(+) as cofactor.

It is found in the cytoplasm. Exhibits a very high intrinsic GTPase hydrolysis rate. Involved in the addition of a carboxymethylaminomethyl (cmnm) group at the wobble position (U34) of certain tRNAs, forming tRNA-cmnm(5)s(2)U34. The chain is tRNA modification GTPase MnmE from Paracidovorax citrulli (strain AAC00-1) (Acidovorax citrulli).